The sequence spans 252 residues: Transcriptional regulatory protein HptR (252 aa).

Residues 3–118 (KVVICDDERI…QLEVILGRLV (116 aa)) enclose the Response regulatory domain. Asp-55 is modified (4-aspartylphosphate). One can recognise an HTH araC/xylS-type domain in the interval 153–250 (NQIVDQIKQS…QMSPSDYCKQ (98 aa)). 2 consecutive DNA-binding regions (H-T-H motif) follow at residues 170–191 (SDLIQHIDVSESYAMRTFKDHV) and 217–240 (HYEIADKVGFSEYKMFSYHFKKYL).

In terms of processing, phosphorylated by HptS.

Its subcellular location is the cytoplasm. In terms of biological role, member of the two-component regulatory system HptS/HptR that regulates genes involved in hexose phosphate transport system in response to changes in extracellular phosphate sources. Activates uhpT expression to facilitate glucose-6-phosphate/G6P utilization by directly binding to its promoter. Antagonizes CcpA-dependent transcription of a subset of CcpA-regulated genes involved in antibiotic susceptibility. The sequence is that of Transcriptional regulatory protein HptR (hptR) from Staphylococcus aureus (strain NCTC 8325 / PS 47).